A 512-amino-acid polypeptide reads, in one-letter code: Maturase K (512 aa).

It belongs to the intron maturase 2 family. MatK subfamily.

It localises to the plastid. It is found in the chloroplast. Functionally, usually encoded in the trnK tRNA gene intron. Probably assists in splicing its own and other chloroplast group II introns. This chain is Maturase K, found in Lilium longiflorum (Trumpet lily).